The primary structure comprises 1034 residues: Probable isoleucine--tRNA ligase, mitochondrial (1034 aa).

The N-terminal 32 residues, 1–32 (MISLNNSFFNKRVIVNSFNNYKRSFGTKSQNE), are a transit peptide targeting the mitochondrion. A 'HIGH' region motif is present at residues 94-104 (PYANGDLHMGH). The short motif at 655-659 (KMSKS) is the 'KMSKS' region element. An ATP-binding site is contributed by lysine 658.

This sequence belongs to the class-I aminoacyl-tRNA synthetase family.

It is found in the mitochondrion matrix. It catalyses the reaction tRNA(Ile) + L-isoleucine + ATP = L-isoleucyl-tRNA(Ile) + AMP + diphosphate. The chain is Probable isoleucine--tRNA ligase, mitochondrial (mileS) from Dictyostelium discoideum (Social amoeba).